The following is a 191-amino-acid chain: Flavin reductase (NADH) (191 aa).

Residue 46 to 52 (YGLTCSA) participates in FAD binding. Serine 55 provides a ligand contact to NAD(+). 72–73 (RV) contributes to the FAD binding site. NAD(+) contacts are provided by residues histidine 144 and 166–169 (YWRR).

Belongs to the non-flavoprotein flavin reductase family.

It catalyses the reaction a reduced flavin + NAD(+) = an oxidized flavin + NADH + 2 H(+). In terms of biological role, catalyzes the reduction of flavin by NADH. Subsequently, the reduced flavins is transferred to the tetracycline 7-halogenase CtcP. This Kitasatospora aureofaciens (Streptomyces aureofaciens) protein is Flavin reductase (NADH).